Here is a 319-residue protein sequence, read N- to C-terminus: tRNA-cytidine(32) 2-sulfurtransferase (319 aa).

The PP-loop motif motif lies at 43–48 (SGGKDS). 3 residues coordinate [4Fe-4S] cluster: cysteine 118, cysteine 121, and cysteine 209.

This sequence belongs to the TtcA family. Homodimer. Mg(2+) is required as a cofactor. [4Fe-4S] cluster serves as cofactor.

It is found in the cytoplasm. It catalyses the reaction cytidine(32) in tRNA + S-sulfanyl-L-cysteinyl-[cysteine desulfurase] + AH2 + ATP = 2-thiocytidine(32) in tRNA + L-cysteinyl-[cysteine desulfurase] + A + AMP + diphosphate + H(+). The protein operates within tRNA modification. In terms of biological role, catalyzes the ATP-dependent 2-thiolation of cytidine in position 32 of tRNA, to form 2-thiocytidine (s(2)C32). The sulfur atoms are provided by the cysteine/cysteine desulfurase (IscS) system. This Neisseria meningitidis serogroup C (strain 053442) protein is tRNA-cytidine(32) 2-sulfurtransferase.